The chain runs to 405 residues: Riboflavin biosynthesis protein RibBA (405 aa).

The tract at residues 1–205 (MSEIQLNTIE…IKDLIAYRLR (205 aa)) is DHBP synthase. D-ribulose 5-phosphate is bound by residues 30–31 (RE), Asp35, 144–148 (RAGHT), and Glu168. Glu31 provides a ligand contact to Mg(2+). His147 is a binding site for Mg(2+). The segment at 206-405 (TESIVENGVE…RMGHVLHNIK (200 aa)) is GTP cyclohydrolase II. Residue 256 to 260 (RVHSS) participates in GTP binding. Cys261, Cys272, and Cys274 together coordinate Zn(2+). Residues Gln277, 299 to 301 (EGR), and Thr321 contribute to the GTP site. Asp333 serves as the catalytic Proton acceptor; for GTP cyclohydrolase activity. Arg335 serves as the catalytic Nucleophile; for GTP cyclohydrolase activity. Residues Ser356 and Lys361 each coordinate GTP.

In the N-terminal section; belongs to the DHBP synthase family. This sequence in the C-terminal section; belongs to the GTP cyclohydrolase II family. The cofactor is Mg(2+). Mn(2+) is required as a cofactor. Zn(2+) serves as cofactor.

It catalyses the reaction D-ribulose 5-phosphate = (2S)-2-hydroxy-3-oxobutyl phosphate + formate + H(+). The enzyme catalyses GTP + 4 H2O = 2,5-diamino-6-hydroxy-4-(5-phosphoribosylamino)-pyrimidine + formate + 2 phosphate + 3 H(+). It functions in the pathway cofactor biosynthesis; riboflavin biosynthesis; 2-hydroxy-3-oxobutyl phosphate from D-ribulose 5-phosphate: step 1/1. The protein operates within cofactor biosynthesis; riboflavin biosynthesis; 5-amino-6-(D-ribitylamino)uracil from GTP: step 1/4. Catalyzes the conversion of D-ribulose 5-phosphate to formate and 3,4-dihydroxy-2-butanone 4-phosphate. Its function is as follows. Catalyzes the conversion of GTP to 2,5-diamino-6-ribosylamino-4(3H)-pyrimidinone 5'-phosphate (DARP), formate and pyrophosphate. This Parabacteroides distasonis (strain ATCC 8503 / DSM 20701 / CIP 104284 / JCM 5825 / NCTC 11152) protein is Riboflavin biosynthesis protein RibBA.